The sequence spans 608 residues: Nuclear protein localization protein 4 homolog (608 aa).

Alanine 2 is subject to N-acetylalanine. At lysine 179 the chain carries N6-acetyllysine. An MPN domain is found at 226–363 (IMFENHTVAD…ICRLSPDGHF (138 aa)). The RanBP2-type zinc-finger motif lies at 580 to 608 (TSAMWACQHCTFMNQPGTGHCEMCSLPRT).

This sequence belongs to the NPL4 family. Heterodimer with UFD1. The heterodimer binds ubiquitinated proteins. The heterodimer binds to VCP and inhibits Golgi membrane fusion. Interacts with ZFAND2B; probably through VCP.

The protein localises to the cytoplasm. Its subcellular location is the cytosol. The protein resides in the endoplasmic reticulum. It is found in the nucleus. It functions in the pathway protein degradation; proteasomal ubiquitin-dependent pathway. The ternary complex containing UFD1, VCP and NPLOC4 binds ubiquitinated proteins and is necessary for the export of misfolded proteins from the ER to the cytoplasm, where they are degraded by the proteasome. The NPLOC4-UFD1-VCP complex regulates spindle disassembly at the end of mitosis and is necessary for the formation of a closed nuclear envelope. Acts as a negative regulator of type I interferon production via the complex formed with VCP and UFD1, which binds to RIGI and recruits RNF125 to promote ubiquitination and degradation of RIGI. The chain is Nuclear protein localization protein 4 homolog (Nploc4) from Rattus norvegicus (Rat).